The sequence spans 60 residues: Metallothionein A (60 aa).

Residues 1-28 are beta; sequence MDPCECSKTGKCNCGTSCTCTNCSCKCC. Residues Cys-4, Cys-6, Cys-12, Cys-14, Cys-18, Cys-20, Cys-23, Cys-25, Cys-28, Cys-32, Cys-33, Cys-35, Cys-36, Cys-40, Cys-43, Cys-47, Cys-49, Cys-54, Cys-58, and Cys-59 each coordinate a divalent metal cation. The tract at residues 29–60 is alpha; sequence KKSCCSCCPSGCSKCASGCVCKGNSCDKSCCQ.

It belongs to the metallothionein superfamily. Type 1 family.

Functionally, metallothioneins have a high content of cysteine residues that bind various heavy metals. In Cyprinodon sp. (Pupfish), this protein is Metallothionein A (mta).